Reading from the N-terminus, the 454-residue chain is UDP-N-acetylmuramoylalanine--D-glutamate ligase (454 aa).

ATP is bound at residue 115–121; that stretch reads GTNGKTT.

It belongs to the MurCDEF family.

The protein resides in the cytoplasm. The enzyme catalyses UDP-N-acetyl-alpha-D-muramoyl-L-alanine + D-glutamate + ATP = UDP-N-acetyl-alpha-D-muramoyl-L-alanyl-D-glutamate + ADP + phosphate + H(+). The protein operates within cell wall biogenesis; peptidoglycan biosynthesis. In terms of biological role, cell wall formation. Catalyzes the addition of glutamate to the nucleotide precursor UDP-N-acetylmuramoyl-L-alanine (UMA). This is UDP-N-acetylmuramoylalanine--D-glutamate ligase from Thermoanaerobacter sp. (strain X514).